The primary structure comprises 148 residues: Deoxyuridine 5'-triphosphate nucleotidohydrolase (148 aa).

Substrate is bound by residues 68-70, Asn-81, 85-87, and Lys-95; these read RSG and TID.

It belongs to the dUTPase family. Mg(2+) is required as a cofactor.

The catalysed reaction is dUTP + H2O = dUMP + diphosphate + H(+). The protein operates within pyrimidine metabolism; dUMP biosynthesis; dUMP from dCTP (dUTP route): step 2/2. Its function is as follows. This enzyme is involved in nucleotide metabolism: it produces dUMP, the immediate precursor of thymidine nucleotides and it decreases the intracellular concentration of dUTP so that uracil cannot be incorporated into DNA. This chain is Deoxyuridine 5'-triphosphate nucleotidohydrolase, found in Rickettsia conorii (strain ATCC VR-613 / Malish 7).